The chain runs to 1285 residues: Peroxidasin homolog pxn-1 (1285 aa).

The N-terminal stretch at 1–20 (MNLYLLLLVIATSSWQFVAG) is a signal peptide. The 33-residue stretch at 21 to 53 (LECPVECTCDKKGLVVDCSSSGLTRIPKNISRN) folds into the LRRNT domain. LRR repeat units lie at residues 27-49 (CTCD…IPKN), 50-72 (ISRN…RSDL), 73-96 (EGFN…ENVL), 97-120 (DHLP…PLCS), 122-143 (SRPL…EQVL), 145-168 (YFPD…KLFD), and 204-227 (KVYC…SALT). N-linked (GlcNAc...) asparagine glycosylation is present at Asn-49. The LRRCT domain maps to 180–228 (SNPWHCDCRASKVKALLQKVKWEKKVYCTNPVELRHQALDEVDDSALTC). Asn-248 carries N-linked (GlcNAc...) asparagine glycosylation. The disordered stretch occupies residues 305–324 (RQSQHQGNGSPQFTYKPRDN). A compositionally biased stretch (polar residues) spans 307–317 (SQHQGNGSPQF). 2 consecutive Ig-like C2-type domains span residues 315 to 401 (PQFT…FSLD) and 408 to 495 (PNIY…AKLT). Intrachain disulfides connect Cys-336–Cys-385 and Cys-429–Cys-479. Positions 508-550 (QIDEELLRAIAQKARQNVENAVEKTRKQLTQDKVTNTNDLKRL) form a coiled coil. Asn-595 carries N-linked (GlcNAc...) asparagine glycosylation. Cysteines 625 and 641 form a disulfide. Asp-719 serves as a coordination point for heme b. Catalysis depends on His-720, which acts as the Proton acceptor. Asp-721 lines the Ca(2+) pocket. Cystine bridges form between Cys-740/Cys-750 and Cys-744/Cys-771. Asn-741 is a glycosylation site (N-linked (GlcNAc...) asparagine). Positions 803, 805, 807, and 809 each coordinate Ca(2+). The N-linked (GlcNAc...) asparagine glycan is linked to Asn-858. Glu-877 and His-973 together coordinate heme b. LRR repeat units follow at residues 998 to 1022 (HKAF…GLFA) and 1049 to 1073 (VSLD…TEYR). 2 disulfides stabilise this stretch: Cys-1076–Cys-1133 and Cys-1174–Cys-1201. One copy of the LRR 12 repeat lies at 1168–1189 (TLARLFCDNGDNIDRIQKDVFM).

It belongs to the peroxidase family. XPO subfamily. Ca(2+) is required as a cofactor. The cofactor is heme b. Expressed in the ventral nerve cord, the dorsal nerve cord, head neurons, GABAergic and cholinergic neurons, body wall muscles, vulval muscles, uterine muscles, intestine, the hypodermis and in coelomocytes.

The protein resides in the secreted. It localises to the extracellular space. It is found in the extracellular matrix. It carries out the reaction L-lysyl-[collagen] + L-methionyl-[collagen] + H2O2 = [collagen]-L-lysyl-N-S-L-methionyl-[collagen] + 2 H2O + H(+). The enzyme catalyses bromide + H2O2 = hypobromite + H2O. The catalysed reaction is L-lysyl-[collagen] + L-methionyl-[collagen] + hypobromite = [collagen]-L-lysyl-N-S-L-methionyl-[collagen] + bromide + H2O + H(+). It catalyses the reaction L-tyrosyl-[protein] + bromide + H2O2 + H(+) = 3-bromo-L-tyrosyl-[protein] + 2 H2O. It carries out the reaction hypobromite + L-tyrosyl-[protein] + H(+) = 3-bromo-L-tyrosyl-[protein] + H2O. Catalyzes the two-electron oxidation of bromide by hydrogen peroxide and generates hypobromite as a reactive intermediate which mediates the formation of sulfilimine cross-links between methionine and hydroxylysine residues within an uncross-linked collagen IV NC1 hexamer. Plays a role in the attachment of tissues and in axonal guidance during early developmental stages. May functionally antagonize the peroxidasin pxn-2 to maintain neuronal development. This Caenorhabditis elegans protein is Peroxidasin homolog pxn-1.